A 74-amino-acid polypeptide reads, in one-letter code: DNA-directed RNA polymerase subunit omega (74 aa).

The protein belongs to the RNA polymerase subunit omega family. In terms of assembly, the RNAP catalytic core consists of 2 alpha, 1 beta/beta' and 1 omega subunit. When a sigma factor is associated with the core the holoenzyme is formed, which can initiate transcription.

The enzyme catalyses RNA(n) + a ribonucleoside 5'-triphosphate = RNA(n+1) + diphosphate. In terms of biological role, promotes RNA polymerase assembly. Latches the N- and C-terminal regions of the beta' subunit thereby facilitating its interaction with the beta and alpha subunits. The sequence is that of DNA-directed RNA polymerase subunit omega from Helicobacter hepaticus (strain ATCC 51449 / 3B1).